Consider the following 212-residue polypeptide: uncharacterized protein (212 aa).

The first 18 residues, 1–18 (MIPLVALLVLLTLQASPG), serve as a signal peptide directing secretion. Residues 186 to 208 (IYRLATFFMVSLFVGSFVALVFV) form a helical membrane-spanning segment.

This sequence to A.fulgidus AF_0540.

The protein localises to the membrane. This is an uncharacterized protein from Archaeoglobus fulgidus (strain ATCC 49558 / DSM 4304 / JCM 9628 / NBRC 100126 / VC-16).